Reading from the N-terminus, the 526-residue chain is Glutamyl-tRNA(Gln) amidotransferase subunit A, mitochondrial (526 aa).

Active-site charge relay system residues include Lys76 and Ser171. The active-site Acyl-ester intermediate is the Ser195.

It belongs to the amidase family. GatA subfamily. In terms of assembly, subunit of the heterotrimeric GatCAB amidotransferase (AdT) complex, composed of A (QRSL1), B (GATB) and C (GATC) subunits.

It localises to the mitochondrion. The catalysed reaction is L-glutamyl-tRNA(Gln) + L-glutamine + ATP + H2O = L-glutaminyl-tRNA(Gln) + L-glutamate + ADP + phosphate + H(+). Its function is as follows. Allows the formation of correctly charged Gln-tRNA(Gln) through the transamidation of misacylated Glu-tRNA(Gln) in the mitochondria. The reaction takes place in the presence of glutamine and ATP through an activated gamma-phospho-Glu-tRNA(Gln). The sequence is that of Glutamyl-tRNA(Gln) amidotransferase subunit A, mitochondrial from Canis lupus familiaris (Dog).